A 38-amino-acid polypeptide reads, in one-letter code: Photosystem II reaction center protein T (38 aa).

A helical transmembrane segment spans residues 3–23 (ALVYTFLLVSTLGIIFFAIFF).

Belongs to the PsbT family. As to quaternary structure, PSII is composed of 1 copy each of membrane proteins PsbA, PsbB, PsbC, PsbD, PsbE, PsbF, PsbH, PsbI, PsbJ, PsbK, PsbL, PsbM, PsbT, PsbY, PsbZ, Psb30/Ycf12, at least 3 peripheral proteins of the oxygen-evolving complex and a large number of cofactors. It forms dimeric complexes.

Its subcellular location is the plastid. The protein localises to the chloroplast thylakoid membrane. Functionally, found at the monomer-monomer interface of the photosystem II (PS II) dimer, plays a role in assembly and dimerization of PSII. PSII is a light-driven water plastoquinone oxidoreductase, using light energy to abstract electrons from H(2)O, generating a proton gradient subsequently used for ATP formation. The sequence is that of Photosystem II reaction center protein T from Secale cereale (Rye).